Reading from the N-terminus, the 754-residue chain is 5-methyltetrahydropteroyltriglutamate--homocysteine methyltransferase (754 aa).

Residues 17-20 and Lys-117 contribute to the 5-methyltetrahydropteroyltri-L-glutamate site; that span reads RELK. L-homocysteine contacts are provided by residues 431–433 and Glu-484; that span reads IGS. Residues 431–433 and Glu-484 each bind L-methionine; that span reads IGS. 5-methyltetrahydropteroyltri-L-glutamate is bound by residues 515–516 and Trp-561; that span reads RC. Asp-599 provides a ligand contact to L-homocysteine. Asp-599 contacts L-methionine. Glu-605 contacts 5-methyltetrahydropteroyltri-L-glutamate. Zn(2+) contacts are provided by His-641, Cys-643, and Glu-665. His-694 (proton donor) is an active-site residue. Cys-726 provides a ligand contact to Zn(2+).

The protein belongs to the vitamin-B12 independent methionine synthase family. It depends on Zn(2+) as a cofactor.

It catalyses the reaction 5-methyltetrahydropteroyltri-L-glutamate + L-homocysteine = tetrahydropteroyltri-L-glutamate + L-methionine. It functions in the pathway amino-acid biosynthesis; L-methionine biosynthesis via de novo pathway; L-methionine from L-homocysteine (MetE route): step 1/1. Functionally, catalyzes the transfer of a methyl group from 5-methyltetrahydrofolate to homocysteine resulting in methionine formation. This is 5-methyltetrahydropteroyltriglutamate--homocysteine methyltransferase from Salmonella agona (strain SL483).